The following is a 514-amino-acid chain: MATFVDRVTVHLRAGNGGNGCVSVRREKFKPLAGPDGGNGGNGGDIVLVADPQVTTLLGYHRRPHRSSGNGGFGMGDHRSGHTGEDLELPVPVGTVVKSSEGAELADLTEPGMRIVAAPGGIGGLGNAALSNPKRKAPGFALLGTPGWEGDILLELKTVADIALVGYPSAGKSSLIAALSAAKPKIADYPFTTLHPNLGVVQVGDVRYTVADVPGLIEGASEGRGLGFEFLRHVERCSALLHVLDCATLEPGRDPLSDLDVILAELAAYPVPEGQLPLLERPQLIALNKIDVPDARELADFLRPDLEARGYRVFEISTVSHEGLRPLSFALAELVERARKEQAVLDETRPRIIVRPKTVDDSGFVVKVEGGSEGPVYRVLGAKPERWVAQTDFQNDEAIGYLAARLAKLGVEDQLVRVGAVAGSTVVIGRENGVVFDWEPTLTSAAELISSPRGTDARIGVNARPTRAQRREDYFDRMDAKAEARAELLREREAGLWKDDDAAVQGGSEETGRE.

The Obg domain maps to Ala-2–Val-159. The segment at Arg-62–Glu-88 is disordered. A compositionally biased stretch (basic and acidic residues) spans Gly-76–Glu-85. Residues Ala-160–Glu-336 form the OBG-type G domain. Residues Gly-166–Ser-173, Phe-191–His-195, Asp-212–Gly-215, Asn-288–Asp-291, and Ser-317–Val-319 contribute to the GTP site. Ser-173 and Thr-193 together coordinate Mg(2+). Positions Pro-356–Pro-440 constitute an OCT domain.

The protein belongs to the TRAFAC class OBG-HflX-like GTPase superfamily. OBG GTPase family. As to quaternary structure, monomer. It depends on Mg(2+) as a cofactor.

It is found in the cytoplasm. In terms of biological role, an essential GTPase which binds GTP, GDP and possibly (p)ppGpp with moderate affinity, with high nucleotide exchange rates and a fairly low GTP hydrolysis rate. Plays a role in control of the cell cycle, stress response, ribosome biogenesis and in those bacteria that undergo differentiation, in morphogenesis control. In Leifsonia xyli subsp. xyli (strain CTCB07), this protein is GTPase Obg.